We begin with the raw amino-acid sequence, 329 residues long: tRNA-modifying protein YgfZ (329 aa).

Residues Trp27 and Trp189 each coordinate folate.

It belongs to the tRNA-modifying YgfZ family.

The protein resides in the cytoplasm. Its function is as follows. Folate-binding protein involved in regulating the level of ATP-DnaA and in the modification of some tRNAs. It is probably a key factor in regulatory networks that act via tRNA modification, such as initiation of chromosomal replication. This chain is tRNA-modifying protein YgfZ, found in Cronobacter sakazakii (strain ATCC BAA-894) (Enterobacter sakazakii).